The following is a 306-amino-acid chain: Small ribosomal subunit protein uS2 (306 aa).

Residues 229-238 (GEESAAEERP) show a composition bias toward basic and acidic residues. Positions 229 to 306 (GEESAAEERP…VGEGDESEER (78 aa)) are disordered. Residues 261 to 287 (QPGEPEAEAFEEAAGEPEDSTEEEAAE) show a composition bias toward acidic residues.

The protein belongs to the universal ribosomal protein uS2 family.

The protein is Small ribosomal subunit protein uS2 of Rubrobacter xylanophilus (strain DSM 9941 / JCM 11954 / NBRC 16129 / PRD-1).